The following is a 2208-amino-acid chain: RNA-directed RNA polymerase L (2208 aa).

Positions 26 to 284 are endonuclease; sequence KEALLSQVEV…SHAGTTVPEC (259 aa). Residues Glu-51, Asp-89, and Glu-102 each coordinate Mn(2+). The active site involves Lys-115. A RdRp catalytic domain is found at 1172 to 1370; the sequence is CDMKMAVNNG…FLSSKLNKFV (199 aa). A Mg(2+)-binding site is contributed by Asp-1330.

Belongs to the Bunyavirales RNA polymerase family. Homomultimer; the oligomeric structure is essential for the polymerase activity. Interacts with nucleoprotein N. Interacts with protein Z; this interaction inhibits viral transcription and replication, Z partially blocks the product exit tunnel for the releasing nascent RNA product. Mn(2+) is required as a cofactor. It depends on Mg(2+) as a cofactor.

Its subcellular location is the virion. The protein localises to the host cytoplasm. The enzyme catalyses RNA(n) + a ribonucleoside 5'-triphosphate = RNA(n+1) + diphosphate. RNA-dependent RNA polymerase, which is responsible for the replication and transcription of the viral RNA genome using antigenomic RNA as an intermediate. During transcription, synthesizes subgenomic RNAs and assures their capping by a cap-snatching mechanism, which involves the endonuclease activity cleaving the host capped pre-mRNAs. These short capped RNAs are then used as primers for viral transcription. The 3'-end of subgenomic mRNAs molecules are heterogeneous and not polyadenylated. The replicase function is to direct synthesis of antigenomic and genomic RNA which are encapsidated and non capped. As a consequence of the use of the same enzyme for both transcription and replication, these mechanisms need to be well coordinated. These processes may be regulated by proteins N and Z in a dose-dependent manner. Z protein inhibits the viral polymerase L und thus the viral transcription and RNA synthesis. The chain is RNA-directed RNA polymerase L from Hylaeamys megacephalus (Large-headed rice rat).